A 151-amino-acid chain; its full sequence is Protein SprT-like (151 aa).

The region spanning 6–147 (LQRMVENLSE…GHCNGKLRMK (142 aa)) is the SprT-like domain. Histidine 67 is a Zn(2+) binding site. The active site involves glutamate 68. Histidine 71 lines the Zn(2+) pocket.

The protein belongs to the SprT family. The cofactor is Zn(2+).

It localises to the cytoplasm. The protein is Protein SprT-like of Staphylococcus aureus (strain Mu3 / ATCC 700698).